Consider the following 730-residue polypeptide: Multifunctional procollagen lysine hydroxylase and glycosyltransferase (730 aa).

An N-terminal signal peptide occupies residues 1–16 (MRVLPFLLPLIPVLLA). A required for glycosyltransferase activity region spans residues 20-280 (TDLPELVVVT…CGLEVKESEE (261 aa)). UDP is bound by residues 30–32 (VAT) and 98–100 (DAY). Mn(2+) is bound by residues Asp98, Asp101, and His242. 245 to 248 (GPSK) serves as a coordination point for UDP. An intrachain disulfide couples Cys268 to Cys271. Residues 281-507 (VPLIALNLFI…YYGFLIVSDE (227 aa)) form an accessory region region. Cysteines 554 and 690 form a disulfide. 2-oxoglutarate contacts are provided by Arg590 and Tyr648. Residues 639–730 (ESNMMFVVRY…RYIMVSFINP (92 aa)) form the Fe2OG dioxygenase domain. His659 and Asp661 together coordinate Fe cation. An important for dimerization region spans residues 664-707 (TFSIDIALNKKGRDYEGGGVRYIRYNCTVPADEVGYAMMFPGRL). Asn689 carries N-linked (GlcNAc...) asparagine glycosylation. Residue His711 coordinates Fe cation. 2-oxoglutarate is bound at residue Arg721.

In terms of assembly, homodimer. The cofactor is Fe(2+). It depends on L-ascorbate as a cofactor. Mn(2+) serves as cofactor.

It is found in the rough endoplasmic reticulum. The protein resides in the endoplasmic reticulum lumen. Its subcellular location is the endoplasmic reticulum membrane. It localises to the secreted. The protein localises to the extracellular space. It carries out the reaction L-lysyl-[collagen] + 2-oxoglutarate + O2 = (5R)-5-hydroxy-L-lysyl-[collagen] + succinate + CO2. It catalyses the reaction (5R)-5-hydroxy-L-lysyl-[collagen] + UDP-alpha-D-galactose = (5R)-5-O-(beta-D-galactosyl)-5-hydroxy-L-lysyl-[collagen] + UDP + H(+). The enzyme catalyses (5R)-5-O-(beta-D-galactosyl)-5-hydroxy-L-lysyl-[collagen] + UDP-alpha-D-glucose = (5R)-5-O-[alpha-D-glucosyl-(1-&gt;2)-beta-D-galactosyl]-5-hydroxy-L-lysyl-[collagen] + UDP + H(+). Its function is as follows. Multifunctional enzyme that catalyzes a series of post-translational modifications on Lys residues in procollagen. Catalyzes the formation of hydroxylysine residues in -Xaa-Lys-Gly- sequences in type IV collagens. Transfers galactose onto hydroxylysine groups, giving rise to galactosyl 5-hydroxylysine. Catalyzes the subsequent transfer of glucose moieties, giving rise to 1,2-glucosylgalactosyl-5-hydroxylysine residues. Essential for normal biosynthesis and secretion of type IV collagens. Essential for normal stability of the basement membrane. The polypeptide is Multifunctional procollagen lysine hydroxylase and glycosyltransferase (let-268) (Caenorhabditis elegans).